The sequence spans 363 residues: Pyruvate dehydrogenase E1 component subunit beta-1, mitochondrial (363 aa).

The N-terminal 29 residues, 1 to 29 (MLGILRQRAIDGASTLRRTRFALVSARSY), are a transit peptide targeting the mitochondrion. Glutamate 92 contacts thiamine diphosphate. K(+) contacts are provided by isoleucine 145, alanine 193, isoleucine 194, and aspartate 196. Residues lysine 247 and lysine 254 each participate in a glycyl lysine isopeptide (Lys-Gly) (interchain with G-Cter in ubiquitin) cross-link.

As to quaternary structure, tetramer of 2 alpha and 2 beta subunits. Thiamine diphosphate is required as a cofactor. As to expression, expressed in roots, immature rosettes, and mature rosettes.

The protein resides in the mitochondrion matrix. The enzyme catalyses N(6)-[(R)-lipoyl]-L-lysyl-[protein] + pyruvate + H(+) = N(6)-[(R)-S(8)-acetyldihydrolipoyl]-L-lysyl-[protein] + CO2. In terms of biological role, the pyruvate dehydrogenase complex catalyzes the overall conversion of pyruvate to acetyl-CoA and CO(2). It contains multiple copies of three enzymatic components: pyruvate dehydrogenase (E1), dihydrolipoamide acetyltransferase (E2) and lipoamide dehydrogenase (E3). This Arabidopsis thaliana (Mouse-ear cress) protein is Pyruvate dehydrogenase E1 component subunit beta-1, mitochondrial (PDH2).